Reading from the N-terminus, the 335-residue chain is Glucokinase (335 aa).

11–16 (ADIGGT) is an ATP binding site.

The protein belongs to the bacterial glucokinase family.

The protein localises to the cytoplasm. The enzyme catalyses D-glucose + ATP = D-glucose 6-phosphate + ADP + H(+). In Xanthomonas axonopodis pv. citri (strain 306), this protein is Glucokinase.